Consider the following 600-residue polypeptide: UPF0588 membrane protein C20F10.02c (600 aa).

Helical transmembrane passes span 409-429 (LSAT…TSLV) and 437-457 (YHWL…SVLI).

Belongs to the UPF0588 family.

It is found in the membrane. The polypeptide is UPF0588 membrane protein C20F10.02c (Schizosaccharomyces pombe (strain 972 / ATCC 24843) (Fission yeast)).